The sequence spans 64 residues: Large ribosomal subunit protein bL35c (64 aa).

This sequence belongs to the bacterial ribosomal protein bL35 family.

The protein resides in the plastid. Its subcellular location is the chloroplast. The polypeptide is Large ribosomal subunit protein bL35c (Trieres chinensis (Marine centric diatom)).